The primary structure comprises 507 residues: Phosphoprotein (507 aa).

The segment at 1–48 (MAEEQARHVKNGLECIRALKAEPIGSLAIGEAMAAWSEISDNPGQEQA) is interaction with N0. 4 disordered regions span residues 40–98 (SDNP…FPSR), 134–174 (GLDG…APIS), 201–231 (NNFP…IKKG), and 251–305 (ATQC…KGGD). Residue S86 is modified to Phosphoserine. The span at 134 to 145 (GLDGDSTLSGGD) shows a compositional bias: low complexity. Over residues 146–160 (NESENSDVDIGEPDT) the composition is skewed to acidic residues. Residue S151 is modified to Phosphoserine. Residues 260 to 270 (SEPSGPGAPAG) show a composition bias toward low complexity. The segment covering 279 to 300 (AALTQEWTPESGTTISPRSQNK) has biased composition (polar residues). The interval 304 to 376 (GDYYDDELFS…LSSIMIAIPG (73 aa)) is multimerization. Interaction with the L polymerase stretches follow at residues 361–377 (STLE…IPGL) and 396–410 (PIIG…AEVL). A x domain (XD) region spans residues 457–507 (GPASRSVIRSIIKSSRIEEDRKRYLMTLLDDIKGANDLAKFHQMLMKIIMK). An interaction with the nucleocapsid (N-RNA) region spans residues 459–507 (ASRSVIRSIIKSSRIEEDRKRYLMTLLDDIKGANDLAKFHQMLMKIIMK).

It belongs to the morbillivirus P protein family. As to quaternary structure, homotetramer. Interacts (via multimerization domain and XD domain) with polymerase L; this interaction forms the polymerase L-P complex. Interacts (via N-terminus) with N0 (via Ncore); this interaction allows P to chaperon N0 to avoid N polymerization and non-specific RNA binding before encapsidation. Interacts (via C-terminus) with N-RNA template (via Ntail); this interaction maintains the P/L complex anchored to the nucleocapsid template during the sequential transcription. Interacts (via C-terminus) with protein C this interaction allows C to associate with the ribonucleocapsid. In terms of processing, phosphorylation on serines by host CK2 is necessary for the formation of viral factories.

Functionally, essential cofactor of the RNA polymerase L that plays a central role in the transcription and replication by forming the polymerase complex with RNA polymerase L and recruiting L to the genomic N-RNA template for RNA synthesis. Also plays a central role in the encapsidation of nascent RNA chains by forming the encapsidation complex with the nucleocapsid protein N (N-P complex). Acts as a chaperone for newly synthesized free N protein, so-called N0, allowing encapsidation of nascent RNA chains during replication. The nucleoprotein protein N prevents excessive phosphorylation of P, which leads to down-regulation of viral transcription/ replication. Participates, together with N, in the formation of viral factories (viroplasms), which are large inclusions in the host cytoplasm where replication takes place. The sequence is that of Phosphoprotein (P/V) from Homo sapiens (Human).